Consider the following 486-residue polypeptide: Protein kinase C and casein kinase substrate in neurons protein 2 (486 aa).

The 272-residue stretch at 11–282 (VEVSSDSFWE…SIKAADAVED (272 aa)) folds into the F-BAR domain. A coiled-coil region spans residues 25 to 274 (KRTVKRIDDG…TIYRELEQSI (250 aa)). Lys53 is subject to N6-acetyllysine. Ser273 carries the phosphoserine modification. The residue at position 313 (Ser313) is a Phosphoserine; by PKC. Positions 315 to 426 (REKKKAVDGV…NPFDEDTTSG (112 aa)) are disordered. Positions 327–362 (TGINQTGDQSGQNKPGSNLSVPSNPAQSTQLQSSYN) are enriched in polar residues. An NPF1 motif is present at residues 362–364 (NPF). Phosphoserine; by IKKB is present on Ser373. Positions 384-396 (NVSSYEKTQTYPT) are enriched in polar residues. Ser399 is modified (phosphoserine). Polar residues predominate over residues 404-416 (NNPFSSTDANGDS). The NPF2 signature appears at 405–407 (NPF). An NPF3 motif is present at residues 417–419 (NPF). One can recognise an SH3 domain in the interval 426–486 (GTEVRVRALY…YPANYVEAIQ (61 aa)). At Ser446 the chain carries Phosphoserine.

It belongs to the PACSIN family. Homodimer. May form heterooligomers with other PACSINs. Interacts (via NPF motifs) with EHD1 (via EH domain). Interacts (via NPF motifs) with EHD2 (via EH domain); this interaction probably stabilizes the caveolae. Interacts with EHD3. Interacts (via the SH3 domain) with MICALL1. Interacts with RAC1. Interacts (via SH3 domain) with DNM1, SYN1, SYNJ1 and WASL. Interacts (via F-BAR domain) with CAV1; this interaction induces membrane tubulation. Interacts with TRPV4. Forms a complex with EHD4 and MICALL1; the complex controls CDH5 trafficking and coordinates angiogenesis. Phosphorylated by casein kinase 2 (CK2). Phosphorylation by PKC probably decreases the membrane binding and tubulation capacities of PACSIN2, thereby modulating the lifetime of caveolae. Widely expressed (at protein level).

It localises to the cytoplasm. The protein localises to the cytoskeleton. It is found in the cytoplasmic vesicle membrane. Its subcellular location is the cell projection. The protein resides in the ruffle membrane. It localises to the early endosome. The protein localises to the recycling endosome membrane. It is found in the cell membrane. Its subcellular location is the membrane. The protein resides in the caveola. It localises to the cell junction. The protein localises to the adherens junction. Its function is as follows. Regulates the morphogenesis and endocytosis of caveolae. Lipid-binding protein that is able to promote the tubulation of the phosphatidic acid-containing membranes it preferentially binds. Plays a role in intracellular vesicle-mediated transport. Involved in the endocytosis of cell-surface receptors like the EGF receptor, contributing to its internalization in the absence of EGF stimulus. Essential for endothelial organization in sprouting angiogenesis, modulates CDH5-based junctions. Facilitates endothelial front-rear polarity during migration by recruiting EHD4 and MICALL1 to asymmetric adherens junctions between leader and follower cells. This chain is Protein kinase C and casein kinase substrate in neurons protein 2 (Pacsin2), found in Mus musculus (Mouse).